The chain runs to 458 residues: SLIT-ROBO Rho GTPase-activating protein 2B (458 aa).

An F-BAR domain is found at 22–324 (KEIRAQLTEQ…AVENLDATSD (303 aa)). The span at 181–203 (LKEAEKQEEKQIGKSVKQEDRQT) shows a compositional bias: basic and acidic residues. Residues 181–214 (LKEAEKQEEKQIGKSVKQEDRQTPRSPDSTANVR) form a disordered region. Residues 362–400 (QSELLQRCQQLQSRLSTLKIENEEVKKTMEATLQTIQDI) are a coiled coil.

As to quaternary structure, may interact with SRGAP2; formation of the heterodimer alters SRGAP2 function.

May regulate cell migration and differentiation through interaction with and inhibition of SRGAP2. In contrast to SRGAP2C, it is not able to induce long-lasting changes in synaptic density throughout adulthood. This Homo sapiens (Human) protein is SLIT-ROBO Rho GTPase-activating protein 2B (SRGAP2B).